A 115-amino-acid chain; its full sequence is Transcription and mRNA export factor ENY2 (115 aa).

Belongs to the ENY2 family. As to quaternary structure, component of a deubiquitination module (DUB module) formed by ENY2, SGF11, and UBP22 in Arabidopsis. Interacts directly with SGF11, but not with UBP22. Interacts with MOS4. Expressed in roots, cotyledons, leaves and upper part of sepals.

The protein resides in the nucleus. It is found in the nucleoplasm. Component of a deubiquitination module (DUB module) that specifically deubiquinates monoubiquinated histone H2B (H2Bub). Does not seem to be a component of the TREX-2 complex. Seems to act independently of the SAGA multiprotein complex. The DUB module is responsible for the major H2Bub deubiquitinase activity in Arabidopsis. This Arabidopsis thaliana (Mouse-ear cress) protein is Transcription and mRNA export factor ENY2.